Reading from the N-terminus, the 327-residue chain is Phenylalanine--tRNA ligase alpha subunit (327 aa).

Mg(2+) is bound at residue Glu-252.

This sequence belongs to the class-II aminoacyl-tRNA synthetase family. Phe-tRNA synthetase alpha subunit type 1 subfamily. In terms of assembly, tetramer of two alpha and two beta subunits. Mg(2+) is required as a cofactor.

It localises to the cytoplasm. It carries out the reaction tRNA(Phe) + L-phenylalanine + ATP = L-phenylalanyl-tRNA(Phe) + AMP + diphosphate + H(+). The sequence is that of Phenylalanine--tRNA ligase alpha subunit from Yersinia pestis bv. Antiqua (strain Angola).